A 468-amino-acid polypeptide reads, in one-letter code: Purple acid phosphatase 10 (468 aa).

The N-terminal stretch at 1–25 (MGRVRKSDFGSIVLVLCCVLNSLLC) is a signal peptide. Residues N95 and N113 are each glycosylated (N-linked (GlcNAc...) asparagine). D167 serves as a coordination point for Fe cation. N175 carries an N-linked (GlcNAc...) asparagine glycan. Positions 196 and 199 each coordinate Fe cation. D196 serves as a coordination point for Zn(2+). N233 provides a ligand contact to Zn(2+). A substrate-binding site is contributed by N233. N306 is a glycosylation site (N-linked (GlcNAc...) asparagine). H318 lines the Zn(2+) pocket. The Proton donor role is filled by H328. H355 lines the Zn(2+) pocket. Position 355–357 (355–357 (HVH)) interacts with substrate. H357 provides a ligand contact to Fe cation. N428 is a glycosylation site (N-linked (GlcNAc...) asparagine).

Belongs to the metallophosphoesterase superfamily. Purple acid phosphatase family. Homodimer; disulfide-linked. It depends on Fe cation as a cofactor. Zn(2+) serves as cofactor. Expressed in roots, stems, leaves, flowers and siliques.

Its subcellular location is the secreted. It is found in the cytoplasm. The catalysed reaction is a phosphate monoester + H2O = an alcohol + phosphate. The protein is Purple acid phosphatase 10 (PAP10) of Arabidopsis thaliana (Mouse-ear cress).